The chain runs to 1904 residues: Callose synthase 10 (1904 aa).

An HAT 1 repeat occupies 100–132; it reads VIKQKLAKRDGASIDRDRDIERLWEFYKLYKRR. The next 6 helical transmembrane spans lie at 491-511, 532-552, 562-582, 594-614, 661-681, and 722-742; these read SFIR…IIAF, AIMN…AYSM, VIRF…YVKV, FFFH…LIFG, YVAF…FLQI, and VLAI…AIIG. An LRR 1 repeat occupies 678–701; that stretch reads FLQIKPLVKPTNTIIHLPPFQYSW. LRR repeat units lie at residues 751-774 and 925-948; these read LGEI…FAQN and TLNL…LIRN. Residues 1074–1107 form an HAT 2 repeat; that stretch reads YSSSELRSENEDGISILFYLQKIFPDEWENFLER. The stretch at 1159–1181 is one LRR 4 repeat; sequence FLERRGLGVDDASLTNMPRGFES. The next 9 helical transmembrane spans lie at 1474–1494, 1529–1549, 1554–1574, 1621–1641, 1644–1664, 1747–1767, 1783–1803, 1811–1831, and 1853–1873; these read FTTV…YVFL, FLVQ…ILEL, AIFS…TFSL, AFEV…DGGA, FVLL…APYI, LALY…FKLF, FLQG…IAMT, FACV…AITW, and AAMG…PFIS. The HAT 3 repeat unit spans residues 1659 to 1691; the sequence is LFAPYIFNPSGFEWQKTVEDFEDWVSWLMYKGG.

It belongs to the glycosyltransferase 48 family.

Its subcellular location is the cell membrane. It carries out the reaction [(1-&gt;3)-beta-D-glucosyl](n) + UDP-alpha-D-glucose = [(1-&gt;3)-beta-D-glucosyl](n+1) + UDP + H(+). Involved in sporophytic and gametophytic development. Required for normal plant development and for the proper accumulation of callose at cell plates, cll walls and plasmodesmata. During pollen formation, required for the entry of microspores into mitosis. During plant growth and development, callose is found as a transitory component of the cell plate in dividing cells, is a major component of pollen mother cell walls and pollen tubes, and is found as a structural component of plasmodesmatal canals. Required for proper cell division and tissue patterning throughout plant organs, including stomatal patterning. The polypeptide is Callose synthase 10 (CALS10) (Arabidopsis thaliana (Mouse-ear cress)).